Reading from the N-terminus, the 442-residue chain is Histidine--tRNA ligase (442 aa).

It belongs to the class-II aminoacyl-tRNA synthetase family. In terms of assembly, homodimer.

It is found in the cytoplasm. The catalysed reaction is tRNA(His) + L-histidine + ATP = L-histidyl-tRNA(His) + AMP + diphosphate + H(+). The chain is Histidine--tRNA ligase from Wolinella succinogenes (strain ATCC 29543 / DSM 1740 / CCUG 13145 / JCM 31913 / LMG 7466 / NCTC 11488 / FDC 602W) (Vibrio succinogenes).